The sequence spans 359 residues: 4-hydroxy-3-methylbut-2-en-1-yl diphosphate synthase (flavodoxin) (359 aa).

Residues Cys-264, Cys-267, Cys-299, and Glu-306 each coordinate [4Fe-4S] cluster.

This sequence belongs to the IspG family. The cofactor is [4Fe-4S] cluster.

It catalyses the reaction (2E)-4-hydroxy-3-methylbut-2-enyl diphosphate + oxidized [flavodoxin] + H2O + 2 H(+) = 2-C-methyl-D-erythritol 2,4-cyclic diphosphate + reduced [flavodoxin]. Its pathway is isoprenoid biosynthesis; isopentenyl diphosphate biosynthesis via DXP pathway; isopentenyl diphosphate from 1-deoxy-D-xylulose 5-phosphate: step 5/6. Functionally, converts 2C-methyl-D-erythritol 2,4-cyclodiphosphate (ME-2,4cPP) into 1-hydroxy-2-methyl-2-(E)-butenyl 4-diphosphate. This is 4-hydroxy-3-methylbut-2-en-1-yl diphosphate synthase (flavodoxin) from Helicobacter pylori (strain J99 / ATCC 700824) (Campylobacter pylori J99).